A 353-amino-acid polypeptide reads, in one-letter code: Protein RecA (353 aa).

Gly65–Thr72 contacts ATP.

It belongs to the RecA family.

Its subcellular location is the cytoplasm. Functionally, can catalyze the hydrolysis of ATP in the presence of single-stranded DNA, the ATP-dependent uptake of single-stranded DNA by duplex DNA, and the ATP-dependent hybridization of homologous single-stranded DNAs. It interacts with LexA causing its activation and leading to its autocatalytic cleavage. The chain is Protein RecA from Aeromonas salmonicida (strain A449).